A 212-amino-acid polypeptide reads, in one-letter code: Probable chemoreceptor glutamine deamidase CheD (212 aa).

The protein belongs to the CheD family.

The catalysed reaction is L-glutaminyl-[protein] + H2O = L-glutamyl-[protein] + NH4(+). Its function is as follows. Probably deamidates glutamine residues to glutamate on methyl-accepting chemotaxis receptors (MCPs), playing an important role in chemotaxis. The sequence is that of Probable chemoreceptor glutamine deamidase CheD from Oleidesulfovibrio alaskensis (strain ATCC BAA-1058 / DSM 17464 / G20) (Desulfovibrio alaskensis).